A 1106-amino-acid chain; its full sequence is Platelet-derived growth factor receptor beta (1106 aa).

The signal sequence occupies residues 1–32; that stretch reads MRLPGAMPALALKGELLLLSLLLLLEPQISQG. Ig-like C2-type domains lie at 33–120, 129–210, 214–309, 331–403, and 416–524; these read LVVT…YIFV, PNDA…YRLQ, INVS…INIT, HRSR…HEDA, and PVRV…VIVV. Over 33–532 the chain is Extracellular; that stretch reads LVVTPPGPEL…VVPHSLPFKV (500 aa). Residues asparagine 45, asparagine 89, and asparagine 103 are each glycosylated (N-linked (GlcNAc...) asparagine). Cysteine 54 and cysteine 100 are disulfide-bonded. An intrachain disulfide couples cysteine 149 to cysteine 190. Asparagine 215 and asparagine 230 each carry an N-linked (GlcNAc...) asparagine glycan. A disulfide bridge links cysteine 235 with cysteine 291. Residues asparagine 292, asparagine 307, asparagine 354, asparagine 371, asparagine 468, and asparagine 479 are each glycosylated (N-linked (GlcNAc...) asparagine). Residues cysteine 436 and cysteine 508 are joined by a disulfide bond. The chain crosses the membrane as a helical span at residues 533–553; that stretch reads VVISAILALVVLTIISLIILI. At 554–1106 the chain is on the cytoplasmic side; it reads MLWQKKPRYE…PRAEAEDSFL (553 aa). Phosphotyrosine; by autocatalysis is present on residues tyrosine 562, tyrosine 579, and tyrosine 581. One can recognise a Protein kinase domain in the interval 600–962; it reads LVLGRTLGSG…QLVLLLERLL (363 aa). ATP is bound by residues 606–614 and lysine 634; that span reads LGSGAFGQV. Residue tyrosine 686 is modified to Phosphotyrosine; by ABL1 and ABL2. Phosphotyrosine; by autocatalysis occurs at positions 716, 740, 751, 763, 771, 775, and 778. Residue aspartate 826 is the Proton acceptor of the active site. Tyrosine 857 is modified (phosphotyrosine; by autocatalysis). A phosphotyrosine; by ABL1 and ABL2 mark is found at tyrosine 934 and tyrosine 970. Residues tyrosine 1009 and tyrosine 1021 each carry the phosphotyrosine; by autocatalysis modification. The segment at 1019–1106 is disordered; that stretch reads NDYIIPLPDP…PRAEAEDSFL (88 aa). Residues 1043-1060 show a composition bias toward polar residues; that stretch reads SLASSTLNEVNTSSTISC. The span at 1066-1088 shows a compositional bias: acidic residues; the sequence is PQDEPEPEPQLELQVEPEPELEQ.

The protein belongs to the protein kinase superfamily. Tyr protein kinase family. CSF-1/PDGF receptor subfamily. In terms of assembly, interacts with homodimeric PDGFB and PDGFD, and with heterodimers formed by PDGFA and PDGFB. May also interact with homodimeric PDGFC. Monomer in the absence of bound ligand. Interaction with homodimeric PDGFB, heterodimers formed by PDGFA and PDGFB or homodimeric PDGFD, leads to receptor dimerization, where both PDGFRA homodimers and heterodimers with PDGFRB are observed. Interacts with SH2B2/APS. Interacts directly (tyrosine phosphorylated) with SHB. Interacts (tyrosine phosphorylated) with PIK3R1 and RASA1. Interacts (tyrosine phosphorylated) with CBL. Interacts (tyrosine phosphorylated) with SRC and SRC family kinases. Interacts (tyrosine phosphorylated) with PIK3C2B, maybe indirectly. Interacts (tyrosine phosphorylated) with SHC1, GRB7, GRB10 and NCK1. Interaction with GRB2 is mediated by SHC1. Interacts (via C-terminus) with NHERF1. In terms of processing, autophosphorylated on tyrosine residues upon ligand binding. Autophosphorylation occurs in trans, i.e. one subunit of the dimeric receptor phosphorylates tyrosine residues on the other subunit. Phosphorylation at Tyr-579, and to a lesser degree, at Tyr-581, is important for interaction with SRC family kinases. Phosphorylation at Tyr-740 and Tyr-751 is important for interaction with PIK3R1. Phosphorylation at Tyr-751 is important for interaction with NCK1. Phosphorylation at Tyr-771 and Tyr-857 is important for interaction with RASA1/GAP. Phosphorylation at Tyr-857 is important for efficient phosphorylation of PLCG1 and PTPN11, resulting in increased phosphorylation of AKT1, MAPK1/ERK2 and/or MAPK3/ERK1, PDCD6IP/ALIX and STAM, and in increased cell proliferation. Phosphorylation at Tyr-1009 is important for interaction with PTPN11. Phosphorylation at Tyr-1009 and Tyr-1021 is important for interaction with PLCG1. Phosphorylation at Tyr-1021 is important for interaction with CBL; PLCG1 and CBL compete for the same binding site. Dephosphorylated by PTPRJ at Tyr-751, Tyr-857, Tyr-1009 and Tyr-1021. Dephosphorylated by PTPN2 at Tyr-579 and Tyr-1021. Post-translationally, N-glycosylated. Ubiquitinated. After autophosphorylation, the receptor is polyubiquitinated, leading to its degradation.

Its subcellular location is the cell membrane. The protein resides in the cytoplasmic vesicle. It localises to the lysosome lumen. It carries out the reaction L-tyrosyl-[protein] + ATP = O-phospho-L-tyrosyl-[protein] + ADP + H(+). Present in an inactive conformation in the absence of bound ligand. Binding of PDGFB and/or PDGFD leads to dimerization and activation by autophosphorylation on tyrosine residues. Inhibited by imatinib. Tyrosine-protein kinase that acts as a cell-surface receptor for homodimeric PDGFB and PDGFD and for heterodimers formed by PDGFA and PDGFB, and plays an essential role in the regulation of embryonic development, cell proliferation, survival, differentiation, chemotaxis and migration. Plays an essential role in blood vessel development by promoting proliferation, migration and recruitment of pericytes and smooth muscle cells to endothelial cells. Plays a role in the migration of vascular smooth muscle cells and the formation of neointima at vascular injury sites. Required for normal development of the cardiovascular system. Required for normal recruitment of pericytes (mesangial cells) in the kidney glomerulus, and for normal formation of a branched network of capillaries in kidney glomeruli. Promotes rearrangement of the actin cytoskeleton and the formation of membrane ruffles. Binding of its cognate ligands - homodimeric PDGFB, heterodimers formed by PDGFA and PDGFB or homodimeric PDGFD -leads to the activation of several signaling cascades; the response depends on the nature of the bound ligand and is modulated by the formation of heterodimers between PDGFRA and PDGFRB. Phosphorylates PLCG1, PIK3R1, PTPN11, RASA1/GAP, CBL, SHC1 and NCK1. Activation of PLCG1 leads to the production of the cellular signaling molecules diacylglycerol and inositol 1,4,5-trisphosphate, mobilization of cytosolic Ca(2+) and the activation of protein kinase C. Phosphorylation of PIK3R1, the regulatory subunit of phosphatidylinositol 3-kinase, leads to the activation of the AKT1 signaling pathway. Phosphorylation of SHC1, or of the C-terminus of PTPN11, creates a binding site for GRB2, resulting in the activation of HRAS, RAF1 and down-stream MAP kinases, including MAPK1/ERK2 and/or MAPK3/ERK1. Promotes phosphorylation and activation of SRC family kinases. Promotes phosphorylation of PDCD6IP/ALIX and STAM. Receptor signaling is down-regulated by protein phosphatases that dephosphorylate the receptor and its down-stream effectors, and by rapid internalization of the activated receptor. The sequence is that of Platelet-derived growth factor receptor beta (PDGFRB) from Homo sapiens (Human).